The chain runs to 531 residues: Peptide chain release factor 3 (531 aa).

In terms of domain architecture, tr-type G spans 13 to 282 (AKRRTFAIIS…TLIKYSPPPK (270 aa)). GTP is bound by residues 22–29 (SHPDAGKT), 90–94 (DTPGH), and 144–147 (NKLD).

Belongs to the TRAFAC class translation factor GTPase superfamily. Classic translation factor GTPase family. PrfC subfamily.

The protein resides in the cytoplasm. Increases the formation of ribosomal termination complexes and stimulates activities of RF-1 and RF-2. It binds guanine nucleotides and has strong preference for UGA stop codons. It may interact directly with the ribosome. The stimulation of RF-1 and RF-2 is significantly reduced by GTP and GDP, but not by GMP. This chain is Peptide chain release factor 3, found in Psychrobacter arcticus (strain DSM 17307 / VKM B-2377 / 273-4).